The chain runs to 148 residues: Puroindoline-A (148 aa).

An N-terminal signal peptide occupies residues 1 to 19; that stretch reads MKALFLIGLLALVASTAFA. The propeptide occupies 20–28; it reads QYSEVVGSY. A propeptide spans 147–148 (removed in mature form); sequence YW.

Five disulfide bonds are present. Endosperm and aleurone layer of developing kernels. In the aleurone layer, mainly localized to starch granules and the surface of the plasma membrane, forming a uniform layer, also abundant in the intercellular space. In the endosperm, mainly localized to starch granules and the plasma membrane, but less abundant in the intercellular space. Not found in roots or coleoptiles.

It is found in the membrane. Its subcellular location is the secreted. The protein localises to the extracellular space. Acts as a membranotoxin, probably through its antibacterial and antifungal activities, contributing to the defense mechanism of the plant against predators. Forms monovalent cation-selective ion channels in membranes. Has antibacterial activity against the Gram-positive bacteria S.aureus and C.michiganensis, and the Gram-negative bacteria E.coli, P.syringae pv phaseoli, A.tumefaciens and E.carotovora subsp carotovora. Acts synergistically with PINB against bacteria. Contributes to grain texture and hardness. The chain is Puroindoline-A (PINA) from Triticum aestivum (Wheat).